The chain runs to 442 residues: MTNTTTIDYSLDASWILPVVPHQRLFKDCSLLISRDRIHSIVPTSQSLRDYTVRERISLPGQLLMPGLINCHGHAAMTLLRGFADDMPLETWLKEHIWPVEAQWAGEEFVRDGGELAMAEMLLSGTTCFADMYFFGEALASAVHKAGMRAQLYFPIVDFATAWAQSPDEYIHKGLKLRDTYRSHPLINVHFGPHAPYTVGDAPLERIAVYADELHAQVHIHLHETPEEIESSIKEFGKRPLQRLADMGLLTPLTHCVHMTQTSAEDIALLANSGAHVIHCPRSNLKLASGSCPTAALTQQGVNVALGTDGAASNNSLDMFAELQAAALFGKLVAGDAAAIDAHSAIAMATINGAKAIGLEDQLGSLEPGKQADVIAIDMNDLDLQPVHNPVSQLVYTQMGHRVSNVWVAGEQLVKSRDLTTLSRKEIAANAAQWREKLGAKR.

Residues His-72 and His-74 each contribute to the Zn(2+) site. Substrate-binding residues include Glu-101 and His-194. His-221 is a binding site for Zn(2+). Glu-224 and Asp-309 together coordinate substrate. Asp-309 lines the Zn(2+) pocket.

The protein belongs to the metallo-dependent hydrolases superfamily. MTA/SAH deaminase family. Requires Zn(2+) as cofactor.

The enzyme catalyses S-adenosyl-L-homocysteine + H2O + H(+) = S-inosyl-L-homocysteine + NH4(+). It catalyses the reaction S-methyl-5'-thioadenosine + H2O + H(+) = S-methyl-5'-thioinosine + NH4(+). Catalyzes the deamination of 5-methylthioadenosine and S-adenosyl-L-homocysteine into 5-methylthioinosine and S-inosyl-L-homocysteine, respectively. Is also able to deaminate adenosine. The protein is 5-methylthioadenosine/S-adenosylhomocysteine deaminase of Teredinibacter turnerae (strain ATCC 39867 / T7901).